Consider the following 227-residue polypeptide: Phosphoribosylformylglycinamidine synthase subunit PurQ (227 aa).

The Glutamine amidotransferase type-1 domain occupies 2–226 (KFAVIQFPGS…VQAWKEEQVN (225 aa)). Catalysis depends on Cys86, which acts as the Nucleophile. Residues His195 and Glu197 contribute to the active site.

As to quaternary structure, part of the FGAM synthase complex composed of 1 PurL, 1 PurQ and 2 PurS subunits.

It is found in the cytoplasm. The enzyme catalyses N(2)-formyl-N(1)-(5-phospho-beta-D-ribosyl)glycinamide + L-glutamine + ATP + H2O = 2-formamido-N(1)-(5-O-phospho-beta-D-ribosyl)acetamidine + L-glutamate + ADP + phosphate + H(+). It carries out the reaction L-glutamine + H2O = L-glutamate + NH4(+). It functions in the pathway purine metabolism; IMP biosynthesis via de novo pathway; 5-amino-1-(5-phospho-D-ribosyl)imidazole from N(2)-formyl-N(1)-(5-phospho-D-ribosyl)glycinamide: step 1/2. Part of the phosphoribosylformylglycinamidine synthase complex involved in the purines biosynthetic pathway. Catalyzes the ATP-dependent conversion of formylglycinamide ribonucleotide (FGAR) and glutamine to yield formylglycinamidine ribonucleotide (FGAM) and glutamate. The FGAM synthase complex is composed of three subunits. PurQ produces an ammonia molecule by converting glutamine to glutamate. PurL transfers the ammonia molecule to FGAR to form FGAM in an ATP-dependent manner. PurS interacts with PurQ and PurL and is thought to assist in the transfer of the ammonia molecule from PurQ to PurL. This is Phosphoribosylformylglycinamidine synthase subunit PurQ from Listeria welshimeri serovar 6b (strain ATCC 35897 / DSM 20650 / CCUG 15529 / CIP 8149 / NCTC 11857 / SLCC 5334 / V8).